The chain runs to 274 residues: MPQGEVSFFEVLTTAPFSHELSKKHIAQTQYAAFWISMAYVVVIFGLKAVMTNRKPFDLTGPLNLWNAGLAIFSTLGSLATTFGLLHEFFSRGFFESYIHIGDFYNGLSGMFTWLFVLSKVAEFGDTLFIILRKKPLMFLHWYHHVLTMNYAFMSFEANLGFNTWITWMNFSVHSIMYGYYMLRSFGVKVPAWIAKNITTMQILQFVITHFILFHVGYLAVTGQSVDSTPGYYWFCLLMEISYVVLFGNFYYQSYIKGGGKKFNAEKKTEKKIE.

Residues 1-30 (MPQGEVSFFEVLTTAPFSHELSKKHIAQTQ) lie on the Extracellular side of the membrane. Residues 31–51 (YAAFWISMAYVVVIFGLKAVM) form a helical membrane-spanning segment. Over 52–69 (TNRKPFDLTGPLNLWNAG) the chain is Cytoplasmic. The helical transmembrane segment at 70-90 (LAIFSTLGSLATTFGLLHEFF) threads the bilayer. Residues 91-111 (SRGFFESYIHIGDFYNGLSGM) are Extracellular-facing. The chain crosses the membrane as a helical span at residues 112–132 (FTWLFVLSKVAEFGDTLFIIL). The Cytoplasmic segment spans residues 133–135 (RKK). A helical membrane pass occupies residues 136 to 156 (PLMFLHWYHHVLTMNYAFMSF). The Extracellular segment spans residues 157–159 (EAN). The chain crosses the membrane as a helical span at residues 160-180 (LGFNTWITWMNFSVHSIMYGY). The Cytoplasmic portion of the chain corresponds to 181-202 (YMLRSFGVKVPAWIAKNITTMQ). A helical transmembrane segment spans residues 203–223 (ILQFVITHFILFHVGYLAVTG). The Extracellular portion of the chain corresponds to 224 to 230 (QSVDSTP). Residues 231–251 (GYYWFCLLMEISYVVLFGNFY) traverse the membrane as a helical segment. At 252–274 (YQSYIKGGGKKFNAEKKTEKKIE) the chain is on the cytoplasmic side.

It belongs to the ELO family. Expressed in the gut, neurons, pharynx and muscles of the vulva.

It is found in the membrane. The catalysed reaction is isopentadecanoyl-CoA + malonyl-CoA + H(+) = 3-oxoisoheptadecanoyl-CoA + CO2 + CoA. Its pathway is lipid metabolism; fatty acid biosynthesis. Functionally, catalyzes the first and rate-limiting reaction of the four reactions that constitute the long-chain fatty acids elongation cycle. Uses malonyl-CoA to add 2 carbons per cycle to the chain of long-chain fatty acids. Condensing enzyme required for the formation of isoheptadecanoate (C17iso), which plays critical roles in animal development and growth. In Caenorhabditis elegans, this protein is Long chain fatty acid elongase 6 (elo-6).